Here is a 299-residue protein sequence, read N- to C-terminus: tRNA dimethylallyltransferase (299 aa).

13 to 20 (GPTASGKT) provides a ligand contact to ATP. 15-20 (TASGKT) is a binding site for substrate. The segment at 38 to 41 (DSRQ) is interaction with substrate tRNA.

Belongs to the IPP transferase family. Monomer. The cofactor is Mg(2+).

It catalyses the reaction adenosine(37) in tRNA + dimethylallyl diphosphate = N(6)-dimethylallyladenosine(37) in tRNA + diphosphate. Its function is as follows. Catalyzes the transfer of a dimethylallyl group onto the adenine at position 37 in tRNAs that read codons beginning with uridine, leading to the formation of N6-(dimethylallyl)adenosine (i(6)A). The polypeptide is tRNA dimethylallyltransferase (Prochlorococcus marinus (strain SARG / CCMP1375 / SS120)).